Reading from the N-terminus, the 275-residue chain is NH(3)-dependent NAD(+) synthetase (275 aa).

Residue 46-53 (GISGGQDS) coordinates ATP. Asp52 lines the Mg(2+) pocket. Residue Arg140 coordinates deamido-NAD(+). Position 160 (Thr160) interacts with ATP. Residue Glu165 coordinates Mg(2+). Residues Lys173 and Asp180 each coordinate deamido-NAD(+). ATP-binding residues include Lys189 and Thr211. Position 260 to 261 (260 to 261 (HK)) interacts with deamido-NAD(+).

It belongs to the NAD synthetase family. As to quaternary structure, homodimer.

It catalyses the reaction deamido-NAD(+) + NH4(+) + ATP = AMP + diphosphate + NAD(+) + H(+). It participates in cofactor biosynthesis; NAD(+) biosynthesis; NAD(+) from deamido-NAD(+) (ammonia route): step 1/1. Catalyzes the ATP-dependent amidation of deamido-NAD to form NAD. Uses ammonia as a nitrogen source. This Escherichia coli O6:K15:H31 (strain 536 / UPEC) protein is NH(3)-dependent NAD(+) synthetase.